We begin with the raw amino-acid sequence, 248 residues long: 1-(5-phosphoribosyl)-5-[(5-phosphoribosylamino)methylideneamino] imidazole-4-carboxamide isomerase (248 aa).

Aspartate 8 acts as the Proton acceptor in catalysis. The Proton donor role is filled by aspartate 131.

Belongs to the HisA/HisF family.

It is found in the cytoplasm. The catalysed reaction is 1-(5-phospho-beta-D-ribosyl)-5-[(5-phospho-beta-D-ribosylamino)methylideneamino]imidazole-4-carboxamide = 5-[(5-phospho-1-deoxy-D-ribulos-1-ylimino)methylamino]-1-(5-phospho-beta-D-ribosyl)imidazole-4-carboxamide. It functions in the pathway amino-acid biosynthesis; L-histidine biosynthesis; L-histidine from 5-phospho-alpha-D-ribose 1-diphosphate: step 4/9. The polypeptide is 1-(5-phosphoribosyl)-5-[(5-phosphoribosylamino)methylideneamino] imidazole-4-carboxamide isomerase (Cupriavidus necator (strain ATCC 17699 / DSM 428 / KCTC 22496 / NCIMB 10442 / H16 / Stanier 337) (Ralstonia eutropha)).